Here is a 327-residue protein sequence, read N- to C-terminus: Phenylalanine--tRNA ligase alpha subunit (327 aa).

E252 contacts Mg(2+).

This sequence belongs to the class-II aminoacyl-tRNA synthetase family. Phe-tRNA synthetase alpha subunit type 1 subfamily. As to quaternary structure, tetramer of two alpha and two beta subunits. It depends on Mg(2+) as a cofactor.

The protein resides in the cytoplasm. It catalyses the reaction tRNA(Phe) + L-phenylalanine + ATP = L-phenylalanyl-tRNA(Phe) + AMP + diphosphate + H(+). This chain is Phenylalanine--tRNA ligase alpha subunit, found in Shewanella frigidimarina (strain NCIMB 400).